The chain runs to 143 residues: Hemoglobin subunit alpha (143 aa).

Positions 3-143 constitute a Globin domain; that stretch reads KLSGEDKANV…TMRLCISKYR (141 aa). His60 contributes to the O2 binding site. A heme b-binding site is contributed by His89.

It belongs to the globin family. In terms of assembly, heterotetramer of two alpha chains and two beta chains. In terms of tissue distribution, red blood cells.

In terms of biological role, involved in oxygen transport from the lung to the various peripheral tissues. The polypeptide is Hemoglobin subunit alpha (HBA) (Ambystoma mexicanum (Axolotl)).